The primary structure comprises 366 residues: Isocitrate dehydrogenase [NAD] subunit alpha, mitochondrial (366 aa).

The transit peptide at 1–27 (MAGPAWISKVSRLLGAFHNQKQVTRGF) directs the protein to the mitochondrion. Residue K77 is modified to N6-succinyllysine. T101 bears the Phosphothreonine mark. Positions 115, 125, and 146 each coordinate substrate. Position 223 is an N6-acetyllysine (K223). D233, D257, and D261 together coordinate Mg(2+). N6-acetyllysine; alternate is present on K343. K343 bears the N6-succinyllysine; alternate mark. At K350 the chain carries N6-succinyllysine.

It belongs to the isocitrate and isopropylmalate dehydrogenases family. As to quaternary structure, heterooligomer of subunits alpha (IDH3A), beta (IDH3B), and gamma (IDH3G) in the apparent ratio of 2:1:1. The heterodimer containing one IDH3A and one IDH3B subunit and the heterodimer containing one IDH3A and one IDH3G subunit assemble into a heterotetramer (which contains two subunits of IDH3A, one of IDH3B and one of IDH3G) and further into the heterooctamer. The cofactor is Mg(2+). Requires Mn(2+) as cofactor.

The protein localises to the mitochondrion. The catalysed reaction is D-threo-isocitrate + NAD(+) = 2-oxoglutarate + CO2 + NADH. Its activity is regulated as follows. The heterotetramer and the heterodimer composed of IDH3A and IDH3G subunits can be allosterically activated by citrate (CIT) or/and ADP, and the two activators can act independently or synergistically. The heterodimer composed of IDH3A and IDH3B subunits cannot be allosterically regulated and the allosteric regulation of the heterotetramer is through the IDH3G subunit and not the IDH3B subunit. The IDH3G subunit contains the allosteric site which consists of a CIT-binding site and an ADP-binding site, and the binding of CIT and ADP causes conformational changes at the allosteric site which are transmitted to the active site in the catalytic subunit (IDH3A) through a cascade of conformational changes at the heterodimer interface, leading to stabilization of the isocitrate-binding at the active site and thus activation of the enzyme. ATP can activate the heterotetramer and the heterodimer composed of IDH3A and IDH3G subunits at low concentrations but inhibits their activities at high concentrations, whereas ATP exhibits only inhibitory effect on the heterodimer composed of IDH3A and IDH3B subunits. Catalytic subunit of the enzyme which catalyzes the decarboxylation of isocitrate (ICT) into alpha-ketoglutarate. The heterodimer composed of the alpha (IDH3A) and beta (IDH3B) subunits and the heterodimer composed of the alpha (IDH3A) and gamma (IDH3G) subunits, have considerable basal activity but the full activity of the heterotetramer (containing two subunits of IDH3A, one of IDH3B and one of IDH3G) requires the assembly and cooperative function of both heterodimers. The sequence is that of Isocitrate dehydrogenase [NAD] subunit alpha, mitochondrial (IDH3A) from Sus scrofa (Pig).